Reading from the N-terminus, the 310-residue chain is Ribosomal protein uL3 glutamine methyltransferase (310 aa).

Belongs to the protein N5-glutamine methyltransferase family. PrmB subfamily.

The enzyme catalyses L-glutaminyl-[ribosomal protein uL3] + S-adenosyl-L-methionine = N(5)-methyl-L-glutaminyl-[ribosomal protein uL3] + S-adenosyl-L-homocysteine + H(+). Methylates large ribosomal subunit protein uL3 on a specific glutamine residue. This Yersinia pestis protein is Ribosomal protein uL3 glutamine methyltransferase.